A 2289-amino-acid polypeptide reads, in one-letter code: DNA polymerase II large subunit (2289 aa).

Disordered stretches follow at residues 279–330 (IGSD…SPRA) and 544–563 (SDTN…NTDD). Residues 292–304 (GEADIVKTDKDTN) are compositionally biased toward basic and acidic residues. Residues 305–318 (ESETEDGIDNDDYN) show a composition bias toward acidic residues. The segment covering 544 to 557 (SDTNSASGNTSLRA) has biased composition (polar residues). 2 DOD-type homing endonuclease domains span residues 1222–1367 (LLGY…RLGI) and 1755–1911 (LLGQ…RLGV).

The protein belongs to the archaeal DNA polymerase II family. As to quaternary structure, heterodimer of a large subunit and a small subunit. In terms of processing, this protein undergoes a protein self splicing that involves a post-translational excision of the intervening region (intein) followed by peptide ligation.

It catalyses the reaction DNA(n) + a 2'-deoxyribonucleoside 5'-triphosphate = DNA(n+1) + diphosphate. It carries out the reaction Exonucleolytic cleavage in the 3'- to 5'-direction to yield nucleoside 5'-phosphates.. Functionally, possesses two activities: a DNA synthesis (polymerase) and an exonucleolytic activity that degrades single-stranded DNA in the 3'- to 5'-direction. Has a template-primer preference which is characteristic of a replicative DNA polymerase. In Haloquadratum walsbyi (strain DSM 16790 / HBSQ001), this protein is DNA polymerase II large subunit.